The following is a 238-amino-acid chain: Histone deacetylase 7 (238 aa).

Disordered stretches follow at residues 1–26 and 47–72; these read TPGS…PEPA and QQQR…GQQE. The tract at residues 58-158 is interaction with MEF2A; the sequence is SMDPPLPELQ…LPTEPPEHFP (101 aa). Phosphoserine is present on residues serine 118 and serine 164. Residues 145-238 form a disordered region; that stretch reads PVPSLPTEPP…NPALGSEADG (94 aa). Positions 176–190 are enriched in basic and acidic residues; the sequence is KSLERRKNPLLRKES. Phosphoserine; by PKD/PRKD2 is present on serine 190. Positions 206-221 are enriched in low complexity; that stretch reads SSPSSSSTPASGCSSP.

This sequence belongs to the histone deacetylase family. HD type 2 subfamily. Interacts with HDAC1, HDAC2, HDAC3, HDAC4, HDAC5, NCOR1, NCOR2, SIN3A, SIN3B, RBBP4, RBBP7, MTA1L1, SAP30 and MBD3. Interacts with KAT5 and EDNRA. Interacts with the 14-3-3 protein YWHAE, MEF2A, MEF2B and MEF2C. Interacts with ZMYND15. Interacts with KDM5B. Interacts with PML. Interacts with FOXP3. Interacts with RARA. In terms of processing, may be phosphorylated by CaMK1. Phosphorylated by the PKC kinases PKN1 and PKN2, impairing nuclear import. Phosphorylation at Ser-164 by MARK2, MARK3 and PRKD1 promotes interaction with 14-3-3 proteins and export from the nucleus. Phosphorylation at Ser-164 is a prerequisite for phosphorylation at Ser-190.

Its subcellular location is the nucleus. The protein resides in the cytoplasm. It carries out the reaction N(6)-acetyl-L-lysyl-[histone] + H2O = L-lysyl-[histone] + acetate. The enzyme catalyses N(6)-acetyl-L-lysyl-[protein] + H2O = L-lysyl-[protein] + acetate. Its function is as follows. Responsible for the deacetylation of lysine residues on the N-terminal part of the core histones (H2A, H2B, H3 and H4). Histone deacetylation gives a tag for epigenetic repression and plays an important role in transcriptional regulation, cell cycle progression and developmental events. Histone deacetylases act via the formation of large multiprotein complexes. Involved in muscle maturation by repressing transcription of myocyte enhancer factors such as MEF2A, MEF2B and MEF2C. During muscle differentiation, it shuttles into the cytoplasm, allowing the expression of myocyte enhancer factors. May be involved in Epstein-Barr virus (EBV) latency, possibly by repressing the viral BZLF1 gene. Positively regulates the transcriptional repressor activity of FOXP3. Serves as a corepressor of RARA, causing its deacetylation and inhibition of RARE DNA element binding. In association with RARA, plays a role in the repression of microRNA-10a and thereby in the inflammatory response. Also acetylates non-histone proteins, such as ALKBH5. This is Histone deacetylase 7 (Hdac7) from Rattus norvegicus (Rat).